The following is a 291-amino-acid chain: tRNA-cytidine(32) 2-sulfurtransferase (291 aa).

The PP-loop motif motif lies at 36-41; the sequence is SGGKDS. Positions 111, 114, and 202 each coordinate [4Fe-4S] cluster. The interval 258-291 is disordered; sequence RDPWLDAEDEEAEDCGEPPAGDGVVSLGGARGGR. The span at 262–273 shows a compositional bias: acidic residues; sequence LDAEDEEAEDCG.

This sequence belongs to the TtcA family. Homodimer. It depends on Mg(2+) as a cofactor. [4Fe-4S] cluster serves as cofactor.

It localises to the cytoplasm. The catalysed reaction is cytidine(32) in tRNA + S-sulfanyl-L-cysteinyl-[cysteine desulfurase] + AH2 + ATP = 2-thiocytidine(32) in tRNA + L-cysteinyl-[cysteine desulfurase] + A + AMP + diphosphate + H(+). It functions in the pathway tRNA modification. Functionally, catalyzes the ATP-dependent 2-thiolation of cytidine in position 32 of tRNA, to form 2-thiocytidine (s(2)C32). The sulfur atoms are provided by the cysteine/cysteine desulfurase (IscS) system. The chain is tRNA-cytidine(32) 2-sulfurtransferase from Anaeromyxobacter dehalogenans (strain 2CP-1 / ATCC BAA-258).